Consider the following 436-residue polypeptide: Na(+)/H(+) antiporter NhaA 2 (436 aa).

11 helical membrane-spanning segments follow: residues 35 to 55 (FGGG…NSPW), 80 to 100 (LATW…GLEL), 116 to 136 (ALPV…YVGI), 147 to 167 (GWAI…AVIG), 176 to 196 (AFLL…IAIF), 201 to 221 (FKLT…LLVQ), 226 to 246 (WWWA…ESGV), 283 to 303 (VSAG…SLRG), 313 to 333 (PIVV…IFGS), 354 to 374 (LLGV…IGEL), and 385 to 405 (VKAA…AVLS).

Belongs to the NhaA Na(+)/H(+) (TC 2.A.33) antiporter family.

The protein localises to the cell membrane. It catalyses the reaction Na(+)(in) + 2 H(+)(out) = Na(+)(out) + 2 H(+)(in). In terms of biological role, na(+)/H(+) antiporter that extrudes sodium in exchange for external protons. This Salinispora arenicola (strain CNS-205) protein is Na(+)/H(+) antiporter NhaA 2.